Here is a 196-residue protein sequence, read N- to C-terminus: Putative NADH dehydrogenase/NAD(P)H nitroreductase xcc-b100_0585 (196 aa).

This sequence belongs to the nitroreductase family. HadB/RutE subfamily. FMN is required as a cofactor.

The sequence is that of Putative NADH dehydrogenase/NAD(P)H nitroreductase xcc-b100_0585 from Xanthomonas campestris pv. campestris (strain B100).